Reading from the N-terminus, the 185-residue chain is Putative lipoprotein LprB (185 aa).

A signal peptide spans 1 to 24; sequence MRRKVRRLTLAVSALVALFPAVAG. Residue cysteine 25 is the site of N-palmitoyl cysteine attachment. A lipid anchor (S-diacylglycerol cysteine) is attached at cysteine 25. The segment at 26–50 is disordered; that stretch reads SDSGDNKPGATIPSTPANAEGRHGP.

Its subcellular location is the cell membrane. This Mycobacterium bovis (strain ATCC BAA-935 / AF2122/97) protein is Putative lipoprotein LprB (lprB).